Consider the following 164-residue polypeptide: Large ribosomal subunit protein uL10 (164 aa).

It belongs to the universal ribosomal protein uL10 family. As to quaternary structure, part of the ribosomal stalk of the 50S ribosomal subunit. The N-terminus interacts with L11 and the large rRNA to form the base of the stalk. The C-terminus forms an elongated spine to which L12 dimers bind in a sequential fashion forming a multimeric L10(L12)X complex.

Forms part of the ribosomal stalk, playing a central role in the interaction of the ribosome with GTP-bound translation factors. This is Large ribosomal subunit protein uL10 from Helicobacter pylori (strain G27).